The sequence spans 355 residues: uncharacterized protein (355 aa).

The helical transmembrane segment at 6–26 (LLTPYFLLSILSVGVFTATAA) threads the bilayer.

Belongs to the SUN family.

The protein localises to the membrane. This is an uncharacterized protein from Saccharomyces cerevisiae (strain ATCC 204508 / S288c) (Baker's yeast).